Reading from the N-terminus, the 1372-residue chain is DNA-directed RNA polymerase subunit beta' (1372 aa).

The Zn(2+) site is built by cysteine 69, cysteine 71, cysteine 84, and cysteine 87. The Mg(2+) site is built by aspartate 460, aspartate 462, and aspartate 464. Cysteine 808, cysteine 882, cysteine 889, and cysteine 892 together coordinate Zn(2+).

It belongs to the RNA polymerase beta' chain family. In terms of assembly, the RNAP catalytic core consists of 2 alpha, 1 beta, 1 beta' and 1 omega subunit. When a sigma factor is associated with the core the holoenzyme is formed, which can initiate transcription. The cofactor is Mg(2+). Requires Zn(2+) as cofactor.

The catalysed reaction is RNA(n) + a ribonucleoside 5'-triphosphate = RNA(n+1) + diphosphate. DNA-dependent RNA polymerase catalyzes the transcription of DNA into RNA using the four ribonucleoside triphosphates as substrates. The chain is DNA-directed RNA polymerase subunit beta' from Rickettsia prowazekii (strain Madrid E).